The chain runs to 161 residues: Transcription initiation factor TFIID subunit 12 (161 aa).

Residues 15-55 (FSSIKPEPASTPPQGSMANSTAVVKIPGTPGAGGRLSPENN) are disordered. Lysine 19 is covalently cross-linked (Glycyl lysine isopeptide (Lys-Gly) (interchain with G-Cter in SUMO2)). The span at 26 to 36 (PPQGSMANSTA) shows a compositional bias: polar residues. Phosphothreonine is present on threonine 43. The residue at position 51 (serine 51) is a Phosphoserine. Residue threonine 59 is modified to Phosphothreonine. Residues 59-126 (TKKKLQDLVR…QLHLERQWNM (68 aa)) form the Histone-fold domain.

It belongs to the TAF12 family. As to quaternary structure, component of the TFIID basal transcription factor complex, composed of TATA-box-binding protein TBP, and a number of TBP-associated factors (TAFs), including TAF1, TAF2, TAF3, TAF4, TAF5, TAF6, TAF7, TAF8, TAF9, TAF10, TAF11, TAF12 and TAF13. Component of the TATA-binding protein-free TAF complex (TFTC), the PCAF histone acetylase complex and the STAGA transcription coactivator-HAT complex. Component of the PCAF complex, at least composed of TADA2L/ADA2, TADA3L/ADA3, TAF5L/PAF65-beta, SUPT3H, TAF6L, TAF9, TAF10, TAF12 and TRRAP. Component of the STAGA transcription coactivator-HAT complex, at least composed of SUPT3H, GCN5L2, TAF5L, TAF6L, STAF65-gamma/SUPT7L, TADA3L, TAD1L, TAF10, TAF12, TRRAP and TAF9. Interacts with ATF7 (via the transactivation domain); the interaction is prevented by sumoylation of ATF7. Interacts with TBP; the interaction is direct. Interacts with TAF10; the interaction is direct. Interacts with ATF7, promoting transactivation by ATF7. In terms of assembly, does not promote the transactivation of ATF7. As to expression, ubiquitous.

Its subcellular location is the nucleus. Functionally, the TFIID basal transcription factor complex plays a major role in the initiation of RNA polymerase II (Pol II)-dependent transcription. TFIID recognizes and binds promoters with or without a TATA box via its subunit TBP, a TATA-box-binding protein, and promotes assembly of the pre-initiation complex (PIC). The TFIID complex consists of TBP and TBP-associated factors (TAFs), including TAF1, TAF2, TAF3, TAF4, TAF5, TAF6, TAF7, TAF8, TAF9, TAF10, TAF11, TAF12 and TAF13. Component of the TATA-binding protein-free TAF complex (TFTC), the PCAF histone acetylase complex and the STAGA transcription coactivator-HAT complex. The sequence is that of Transcription initiation factor TFIID subunit 12 from Homo sapiens (Human).